The following is a 380-amino-acid chain: 1-deoxy-D-xylulose 5-phosphate reductoisomerase (380 aa).

NADPH is bound by residues Thr10, Gly11, Ser12, Ile13, Gly36, Arg37, Asn38, and Asn120. 1-deoxy-D-xylulose 5-phosphate is bound at residue Lys121. Glu122 is a binding site for NADPH. Asp146 provides a ligand contact to Mn(2+). Residues Ser147, Glu148, Ser172, and His195 each contribute to the 1-deoxy-D-xylulose 5-phosphate site. Glu148 provides a ligand contact to Mn(2+). Gly201 provides a ligand contact to NADPH. 1-deoxy-D-xylulose 5-phosphate is bound by residues Ser208, Asn213, Lys214, and Glu217. Glu217 is a Mn(2+) binding site.

The protein belongs to the DXR family. Mg(2+) serves as cofactor. The cofactor is Mn(2+).

It catalyses the reaction 2-C-methyl-D-erythritol 4-phosphate + NADP(+) = 1-deoxy-D-xylulose 5-phosphate + NADPH + H(+). The protein operates within isoprenoid biosynthesis; isopentenyl diphosphate biosynthesis via DXP pathway; isopentenyl diphosphate from 1-deoxy-D-xylulose 5-phosphate: step 1/6. Catalyzes the NADPH-dependent rearrangement and reduction of 1-deoxy-D-xylulose-5-phosphate (DXP) to 2-C-methyl-D-erythritol 4-phosphate (MEP). The sequence is that of 1-deoxy-D-xylulose 5-phosphate reductoisomerase from Listeria monocytogenes serovar 1/2a (strain ATCC BAA-679 / EGD-e).